The sequence spans 357 residues: UDP-arabinopyranose mutase 1 (357 aa).

N-acetylvaline is present on valine 2. The short motif at 110–112 (DDD) is the DXD motif element. The N-linked (Glc...) arginine glycan is linked to arginine 158.

This sequence belongs to the RGP family. Heteromers with RGP2, RGP3, RGP4 and RGP5. Requires Mn(2+) as cofactor. The cofactor is Mg(2+). Reversibly glycosylated in vitro by UDP-glucose, UDP-xylose and UDP-galactose, but not UDP-mannose. In terms of tissue distribution, predominantly expressed in shoot and root apical meristems. Expressed in epidermal cells of leaves, inflorescence stems and seed coat. Expressed in pollen.

It localises to the cytoplasm. Its subcellular location is the cytosol. It is found in the golgi apparatus. It catalyses the reaction UDP-beta-L-arabinofuranose = UDP-beta-L-arabinopyranose. In terms of biological role, UDP-L-arabinose mutase involved in the biosynthesis of cell wall non-cellulosic polysaccharides. Catalyzes the interconvertion of UDP-L-arabinopyranose (UDP-Arap) and UDP-L-arabinofuranose (UDP-Araf) in vitro. Preferentially catalyzes the formation of UDP-Arap from UDP-Araf. At thermodynamic equilibrium in vitro the ratio of the pyranose form over the furanose form is 95:5. Is not active on other UDP-sugars (UDP-Gal, UDP-Xyl, UDP-Glc, GDP-Man and GDP-Fuc). Functions redundantly with RGP2 and is essential for proper cell walls and pollen development. Probably involved in the formation of the pectocellulosic cell wall layer intine. Is probably active as heteromer in vivo. This Arabidopsis thaliana (Mouse-ear cress) protein is UDP-arabinopyranose mutase 1.